A 341-amino-acid chain; its full sequence is Uroporphyrinogen decarboxylase (341 aa).

Substrate-binding positions include 26–30, aspartate 75, tyrosine 150, serine 205, and histidine 318; that span reads RQAGR.

Belongs to the uroporphyrinogen decarboxylase family. In terms of assembly, homodimer.

It is found in the cytoplasm. The enzyme catalyses uroporphyrinogen III + 4 H(+) = coproporphyrinogen III + 4 CO2. The protein operates within porphyrin-containing compound metabolism; protoporphyrin-IX biosynthesis; coproporphyrinogen-III from 5-aminolevulinate: step 4/4. Functionally, catalyzes the decarboxylation of four acetate groups of uroporphyrinogen-III to yield coproporphyrinogen-III. The sequence is that of Uroporphyrinogen decarboxylase from Thermus thermophilus (strain ATCC BAA-163 / DSM 7039 / HB27).